We begin with the raw amino-acid sequence, 213 residues long: Imidazole glycerol phosphate synthase subunit HisH (213 aa).

One can recognise a Glutamine amidotransferase type-1 domain in the interval 6-213 (LVTVIDYGMG…FKNFLNWNGQ (208 aa)). Residue cysteine 86 is the Nucleophile of the active site. Active-site residues include histidine 192 and glutamate 194.

In terms of assembly, heterodimer of HisH and HisF.

Its subcellular location is the cytoplasm. It catalyses the reaction 5-[(5-phospho-1-deoxy-D-ribulos-1-ylimino)methylamino]-1-(5-phospho-beta-D-ribosyl)imidazole-4-carboxamide + L-glutamine = D-erythro-1-(imidazol-4-yl)glycerol 3-phosphate + 5-amino-1-(5-phospho-beta-D-ribosyl)imidazole-4-carboxamide + L-glutamate + H(+). It carries out the reaction L-glutamine + H2O = L-glutamate + NH4(+). Its pathway is amino-acid biosynthesis; L-histidine biosynthesis; L-histidine from 5-phospho-alpha-D-ribose 1-diphosphate: step 5/9. Functionally, IGPS catalyzes the conversion of PRFAR and glutamine to IGP, AICAR and glutamate. The HisH subunit catalyzes the hydrolysis of glutamine to glutamate and ammonia as part of the synthesis of IGP and AICAR. The resulting ammonia molecule is channeled to the active site of HisF. This Hydrogenovibrio crunogenus (strain DSM 25203 / XCL-2) (Thiomicrospira crunogena) protein is Imidazole glycerol phosphate synthase subunit HisH.